We begin with the raw amino-acid sequence, 95 residues long: Co-chaperonin GroES (95 aa).

This sequence belongs to the GroES chaperonin family. As to quaternary structure, heptamer of 7 subunits arranged in a ring. Interacts with the chaperonin GroEL.

It localises to the cytoplasm. Together with the chaperonin GroEL, plays an essential role in assisting protein folding. The GroEL-GroES system forms a nano-cage that allows encapsulation of the non-native substrate proteins and provides a physical environment optimized to promote and accelerate protein folding. GroES binds to the apical surface of the GroEL ring, thereby capping the opening of the GroEL channel. The chain is Co-chaperonin GroES from Chlorobium luteolum (strain DSM 273 / BCRC 81028 / 2530) (Pelodictyon luteolum).